Reading from the N-terminus, the 326-residue chain is Pyruvate dehydrogenase E1 component subunit beta (326 aa).

Glu62 lines the thiamine diphosphate pocket.

Heterodimer of an alpha and a beta chain. Thiamine diphosphate serves as cofactor.

It carries out the reaction N(6)-[(R)-lipoyl]-L-lysyl-[protein] + pyruvate + H(+) = N(6)-[(R)-S(8)-acetyldihydrolipoyl]-L-lysyl-[protein] + CO2. Its function is as follows. The pyruvate dehydrogenase complex catalyzes the overall conversion of pyruvate to acetyl-CoA and CO(2). It contains multiple copies of three enzymatic components: pyruvate dehydrogenase (E1), dihydrolipoamide acetyltransferase (E2) and lipoamide dehydrogenase (E3). In Mycoplasma genitalium (strain ATCC 33530 / DSM 19775 / NCTC 10195 / G37) (Mycoplasmoides genitalium), this protein is Pyruvate dehydrogenase E1 component subunit beta (pdhB).